Here is a 474-residue protein sequence, read N- to C-terminus: Stabilizer of axonemal microtubules 1 (474 aa).

Mn stretches follow at residues 30–64 (KPCL…KGPI), 65–97 (PMEG…PSEE), 98–131 (NMDL…PCSD), 132–165 (KMEC…PASV), 166–199 (RFDN…LCNI), 200–232 (PLED…PCEI), 233–266 (PFES…GLDM), 267–299 (PFCN…PPED), 300–332 (RMDL…KKCG), 333–366 (RFEG…LPTE), 367–400 (PLDC…RGNV), and 401–434 (PVES…TFEE). The tract at residues 446-474 (VSQAGSQQSSHLSVDDSENPNQRELEVLA) is disordered. Residues 448-457 (QAGSQQSSHL) are compositionally biased toward polar residues.

The protein belongs to the FAM154 family. Associates with microtubules via the Mn regions. In terms of tissue distribution, widely expressed, with highest levels in testis. Expressed in mature spermatozoa (at protein level).

The protein resides in the cytoplasm. Its subcellular location is the cytoskeleton. It localises to the microtubule organizing center. The protein localises to the centrosome. It is found in the centriole. The protein resides in the cilium basal body. Its subcellular location is the cilium axoneme. It localises to the flagellum axoneme. Functionally, may play a role in the regulation of cilium length. Stabilizes microtubules at low temperature. The protein is Stabilizer of axonemal microtubules 1 (SAXO1) of Homo sapiens (Human).